Reading from the N-terminus, the 302-residue chain is Cobalt-precorrin-6A reductase (302 aa).

A compositionally biased stretch (basic and acidic residues) spans 1-10 (MQTPEIKEGT). The interval 1-37 (MQTPEIKEGTEQYLWRRKTMNPGDKGVKRKGSDRQRE) is disordered.

The protein belongs to the precorrin-6x reductase family.

The catalysed reaction is Co-precorrin-6B + NAD(+) = Co-precorrin-6A + NADH + H(+). The protein operates within cofactor biosynthesis; adenosylcobalamin biosynthesis; cob(II)yrinate a,c-diamide from sirohydrochlorin (anaerobic route): step 7/10. Catalyzes the reduction of the macrocycle of cobalt-precorrin-6A to cobalt-precorrin-6B. This Methanothermobacter thermautotrophicus (strain ATCC 29096 / DSM 1053 / JCM 10044 / NBRC 100330 / Delta H) (Methanobacterium thermoautotrophicum) protein is Cobalt-precorrin-6A reductase (cbiJ).